We begin with the raw amino-acid sequence, 507 residues long: Aldehyde dehydrogenase 1, mitochondrial (507 aa).

A mitochondrion-targeting transit peptide spans 1 to 21 (MLATRNLVPIIRASIKWRIKL). 266–271 (GSTLVG) provides a ligand contact to NAD(+). Residues Glu-289 and Cys-323 contribute to the active site.

The protein belongs to the aldehyde dehydrogenase family. As to quaternary structure, homotetramer.

The protein localises to the mitochondrion matrix. It carries out the reaction an aldehyde + NAD(+) + H2O = a carboxylate + NADH + 2 H(+). Its pathway is alcohol metabolism; ethanol degradation; acetate from ethanol: step 2/2. The chain is Aldehyde dehydrogenase 1, mitochondrial (ALD1) from Saccharomyces cerevisiae (Baker's yeast).